An 89-amino-acid polypeptide reads, in one-letter code: Small ribosomal subunit protein uS17 (89 aa).

The protein belongs to the universal ribosomal protein uS17 family. In terms of assembly, part of the 30S ribosomal subunit.

In terms of biological role, one of the primary rRNA binding proteins, it binds specifically to the 5'-end of 16S ribosomal RNA. In Baumannia cicadellinicola subsp. Homalodisca coagulata, this protein is Small ribosomal subunit protein uS17.